The primary structure comprises 425 residues: Putative integrase/recombinase y4rF (425 aa).

The region spanning 123–210 is the Core-binding (CB) domain; that stretch reads DPDALLLASF…HIRTFLRFLC (88 aa). In terms of domain architecture, Tyr recombinase spans 233–418; the sequence is HLPPRLAWGD…AASQLAEVAL (186 aa). Residues Arg273, Lys298, His370, Arg373, and His396 contribute to the active site. Catalysis depends on Tyr405, which acts as the O-(3'-phospho-DNA)-tyrosine intermediate.

This sequence belongs to the 'phage' integrase family.

The polypeptide is Putative integrase/recombinase y4rF (Sinorhizobium fredii (strain NBRC 101917 / NGR234)).